Here is a 157-residue protein sequence, read N- to C-terminus: Class-10 pathogenesis-related protein 1 (157 aa).

This sequence belongs to the BetVI family. High levels in roots and not detectable in hypocotyls, cotyledons, stems, leaves and flower buds of untreated plants. After induction, high levels are present in the vascular bundles of leaves.

It localises to the cytoplasm. The chain is Class-10 pathogenesis-related protein 1 (MSPR10-1) from Medicago sativa (Alfalfa).